Consider the following 244-residue polypeptide: tRNA pseudouridine synthase A (244 aa).

Catalysis depends on Asp52, which acts as the Nucleophile. Tyr110 lines the substrate pocket.

The protein belongs to the tRNA pseudouridine synthase TruA family. Homodimer.

The catalysed reaction is uridine(38/39/40) in tRNA = pseudouridine(38/39/40) in tRNA. In terms of biological role, formation of pseudouridine at positions 38, 39 and 40 in the anticodon stem and loop of transfer RNAs. This Clostridium acetobutylicum (strain ATCC 824 / DSM 792 / JCM 1419 / IAM 19013 / LMG 5710 / NBRC 13948 / NRRL B-527 / VKM B-1787 / 2291 / W) protein is tRNA pseudouridine synthase A.